The chain runs to 322 residues: Ferrochelatase (322 aa).

Fe cation-binding residues include His-195 and Glu-276.

It belongs to the ferrochelatase family.

It is found in the cytoplasm. The enzyme catalyses heme b + 2 H(+) = protoporphyrin IX + Fe(2+). Its pathway is porphyrin-containing compound metabolism; protoheme biosynthesis; protoheme from protoporphyrin-IX: step 1/1. In terms of biological role, catalyzes the ferrous insertion into protoporphyrin IX. The polypeptide is Ferrochelatase (Edwardsiella ictaluri (strain 93-146)).